A 240-amino-acid polypeptide reads, in one-letter code: Uridylate kinase (240 aa).

12 to 15 (KLSG) lines the ATP pocket. Residues 20 to 25 (GDQGYG) form an involved in allosteric activation by GTP region. G54 lines the UMP pocket. Positions 55 and 59 each coordinate ATP. Residues D74 and 135 to 142 (TGNPYFST) contribute to the UMP site. ATP-binding residues include N163, Y169, and D172.

Belongs to the UMP kinase family. As to quaternary structure, homohexamer.

It is found in the cytoplasm. The enzyme catalyses UMP + ATP = UDP + ADP. Its pathway is pyrimidine metabolism; CTP biosynthesis via de novo pathway; UDP from UMP (UMPK route): step 1/1. Allosterically activated by GTP. Inhibited by UTP. Catalyzes the reversible phosphorylation of UMP to UDP. The protein is Uridylate kinase of Oceanobacillus iheyensis (strain DSM 14371 / CIP 107618 / JCM 11309 / KCTC 3954 / HTE831).